A 238-amino-acid polypeptide reads, in one-letter code: Ribitol-5-phosphate cytidylyltransferase 2 (238 aa).

CTP-binding positions include 7–10 (LAGG) and 81–87 (GTDRNET).

The protein belongs to the IspD/TarI cytidylyltransferase family. TarI subfamily.

The catalysed reaction is D-ribitol 5-phosphate + CTP + H(+) = CDP-L-ribitol + diphosphate. Its pathway is cell wall biogenesis; poly(ribitol phosphate) teichoic acid biosynthesis. In terms of biological role, catalyzes the transfer of the cytidylyl group of CTP to D-ribitol 5-phosphate. The sequence is that of Ribitol-5-phosphate cytidylyltransferase 2 from Staphylococcus aureus (strain MSSA476).